The following is a 372-amino-acid chain: Chaperone protein DnaJ (372 aa).

In terms of domain architecture, J spans 5–70; it reads DYYEVLGVAK…DKRAAYDQFG (66 aa). The CR-type zinc-finger motif lies at 133 to 211; that stretch reads GTETKIRIPT…CHGEGRVKKH (79 aa). Zn(2+) contacts are provided by C146, C149, C163, C166, C185, C188, C199, and C202. 4 CXXCXGXG motif repeats span residues 146–153, 163–170, 185–192, and 199–206; these read CGTCHGSG, CSACGGHG, CPRCGGTG, and CPSCHGEG.

This sequence belongs to the DnaJ family. As to quaternary structure, homodimer. Zn(2+) serves as cofactor.

Its subcellular location is the cytoplasm. In terms of biological role, participates actively in the response to hyperosmotic and heat shock by preventing the aggregation of stress-denatured proteins and by disaggregating proteins, also in an autonomous, DnaK-independent fashion. Unfolded proteins bind initially to DnaJ; upon interaction with the DnaJ-bound protein, DnaK hydrolyzes its bound ATP, resulting in the formation of a stable complex. GrpE releases ADP from DnaK; ATP binding to DnaK triggers the release of the substrate protein, thus completing the reaction cycle. Several rounds of ATP-dependent interactions between DnaJ, DnaK and GrpE are required for fully efficient folding. Also involved, together with DnaK and GrpE, in the DNA replication of plasmids through activation of initiation proteins. The sequence is that of Chaperone protein DnaJ from Thiobacillus denitrificans (strain ATCC 25259 / T1).